An 800-amino-acid chain; its full sequence is Blood-group-substance endo-1,4-beta-galactosidase (800 aa).

The signal sequence occupies residues 1-35; it reads MGGVTMKNNLKKYIKYILSVILVFFVGVNGMEVYA.

This sequence belongs to the glycosyl hydrolase 98 family.

It localises to the secreted. The enzyme catalyses Endohydrolysis of (1-&gt;4)-beta-D-galactosidic linkages in blood group A and B substances.. Functionally, endo-beta-galactosidase capable of releasing both the blood group A trisaccharide (A-Tri; GalNAcalpha1--&gt;3(Fucalpha1--&gt;2)Gal) and B trisaccharide (B-Tri; Galalpha1--&gt;3(Fucalpha1--&gt;2)Gal) glycotopes from blood group A- and B-containing glycoconjugates, respectively. This Clostridium perfringens protein is Blood-group-substance endo-1,4-beta-galactosidase (eabC).